The following is a 131-amino-acid chain: Cuticle protein 79, isoform B (131 aa).

3 tandem repeats follow at residues 37-40 (AAPA), 45-48 (AAPA), and 53-56 (AAPA).

Its function is as follows. Component of the cuticle of migratory locust which contains more than 100 different structural proteins. The polypeptide is Cuticle protein 79, isoform B (Locusta migratoria (Migratory locust)).